The following is a 136-amino-acid chain: MTMTVIPQNSPIQATGRRKTATATVILKPGKGEVSINGKDLEFYFPTFVHRYEVFKPLEVIEGTKKFDIIAKARGGGLMGQAQALKLAVSRALIKYDPSYRSLLKKEGLLTRDPRMKERKKTGQPGARKRFQFSKR.

Residues 111–136 (TRDPRMKERKKTGQPGARKRFQFSKR) form a disordered region. The segment covering 117–136 (KERKKTGQPGARKRFQFSKR) has biased composition (basic residues).

Belongs to the universal ribosomal protein uS9 family.

This is Small ribosomal subunit protein uS9 from Methylacidiphilum infernorum (isolate V4) (Methylokorus infernorum (strain V4)).